A 231-amino-acid chain; its full sequence is Cytidylate kinase (231 aa).

18-26 (GPSGTGKSS) provides a ligand contact to ATP.

Belongs to the cytidylate kinase family. Type 1 subfamily.

The protein localises to the cytoplasm. It carries out the reaction CMP + ATP = CDP + ADP. The catalysed reaction is dCMP + ATP = dCDP + ADP. This Streptomyces coelicolor (strain ATCC BAA-471 / A3(2) / M145) protein is Cytidylate kinase.